The primary structure comprises 1202 residues: Liprin-alpha-1 (1202 aa).

The tract at residues 1–33 is disordered; it reads MMCEVMPTISEAEGPPGGGGGHGSGSPSQPDAD. Over residues 15 to 24 the composition is skewed to gly residues; sequence PPGGGGGHGS. Positions 34 to 141 form a coiled coil; that stretch reads SHFEQLMVSM…VSRHERSLRM (108 aa). Position 150 is a phosphoserine (Ser-150). A coiled-coil region spans residues 176–214; that stretch reads EKVRERLRVALERCSLLEEELGATHKELMILKEQNNQKK. 2 disordered regions span residues 224–245 and 426–446; these read NHEQ…SLSH and KNQE…HNKR. Thr-230 bears the Phosphothreonine mark. Phosphoserine is present on residues Ser-239, Ser-242, and Ser-244. Coiled coils occupy residues 249–521 and 623–669; these read LAKV…GASL and ADAH…SGSL. Position 448 is a phosphoserine (Ser-448). Residues 651-662 show a composition bias toward basic and acidic residues; it reads ENTEQRAEEIES. The interval 651–855 is disordered; it reads ENTEQRAEEI…SKLGGQAEKN (205 aa). Phosphoserine occurs at positions 666, 668, and 693. Residues 686 to 700 are compositionally biased toward low complexity; that stretch reads ASSLASSSPPGSGRS. The segment covering 725-736 has biased composition (basic and acidic residues); it reads SREEVRDDKTTI. Thr-761 carries the phosphothreonine modification. The segment covering 762–771 has biased composition (basic and acidic residues); the sequence is VSHEDIRDIR. Ser-763 is modified (phosphoserine). Residues 832–841 show a composition bias toward polar residues; that stretch reads VSETDNSSQD. A coiled-coil region spans residues 847 to 871; it reads KLGGQAEKNRKLQKKHELLEEARRQ. SAM domains follow at residues 878 to 944, 963 to 1027, and 1051 to 1120; these read WDGP…IMSL, NHEW…LRRL, and WSND…LLVM. Residues 1021-1050 adopt a coiled-coil conformation; sequence IMCLRRLNYDRKELERKREESQSEIKDVLV. Position 1133 is a phosphoserine (Ser-1133). Residue Thr-1159 is modified to Phosphothreonine. The disordered stretch occupies residues 1163-1202; the sequence is NFRVTSSMSSPSMQPKKMQMDGNVSGTQRLDSATVRTYSC. Residues 1168–1179 are compositionally biased toward low complexity; it reads SSMSSPSMQPKK. The segment covering 1184-1202 has biased composition (polar residues); sequence GNVSGTQRLDSATVRTYSC.

The protein belongs to the liprin family. Liprin-alpha subfamily. In terms of assembly, homodimer. Interacts with PTPRF (via D2 domain). Part of a cortical microtubule stabilization complex (CMSC) composed of KANK1, PPFIA1, PPFIBP1, ERC1/ELKS, PHLDB2/LL5beta, CLASPs, KIF21A and possibly additional interactors; within CMSCs KANK1 and PHLDB2/LL5beta seem to be the core components for recruiting microtubule-binding proteins KIF21A and CLASPs, whereas PPFIA1, PPFIBP1 and ERC1/ELKS serve as scaffolds for protein clustering. In terms of tissue distribution, ubiquitous.

It localises to the cytoplasm. The protein localises to the cell cortex. May regulate the disassembly of focal adhesions. May localize receptor-like tyrosine phosphatases type 2A at specific sites on the plasma membrane, possibly regulating their interaction with the extracellular environment and their association with substrates. The polypeptide is Liprin-alpha-1 (PPFIA1) (Homo sapiens (Human)).